The chain runs to 2320 residues: Bromodomain and WD repeat-containing protein 1 (2320 aa).

WD repeat units lie at residues 184-223, 226-265, 268-311, 322-365, 366-405, 424-463, 466-506, and 514-553; these read GHLS…LLST, GHSA…PVAV, GHTG…LKFS, RPGV…AELE, SHTD…WRSI, FMKP…LLHN, GHAD…KMKH, and QGHG…PYEK. The segment at 668–691 is disordered; it reads QRMGADQDTIPRGLSNGEETPRRG. At T687 the chain carries Phosphothreonine. Phosphoserine is present on residues S696, S701, and S710. 2 disordered regions span residues 809–867 and 895–925; these read NRSW…RYSD and SEDE…ENLR. 2 stretches are compositionally biased toward low complexity: residues 814 to 824 and 854 to 867; these read ELSSGNESSSS and YSES…RYSD. A compositionally biased stretch (basic residues) spans 907–918; it reads PKRRRKRKKENK. Positions 1157–1264 constitute a Bromo 1 domain; the sequence is WGQKSRDEEC…DQLLKFIKNQ (108 aa). The interval 1271 to 1304 is disordered; that stretch reads ELSNTSENDEQNAEDLDDSDLPKTSSGRRRVHDG. Over residues 1277–1289 the composition is skewed to acidic residues; that stretch reads ENDEQNAEDLDDS. S1289 carries the post-translational modification Phosphoserine. In terms of domain architecture, Bromo 2 spans 1313 to 1418; the sequence is YVESNWKKQC…ALFEEKMKKI (106 aa). The disordered stretch occupies residues 1434–1593; sequence RSQRFKQRQN…TGPVSLANGC (160 aa). The segment covering 1443-1454 has biased composition (polar residues); sequence NCKGDSQPNKSI. Over residues 1455–1464 the composition is skewed to basic residues; that stretch reads RNLKPKRLKS. Residue S1475 is modified to Phosphoserine. The segment covering 1475–1496 has biased composition (polar residues); it reads SPTQSTSSRTAYLGTHKTSAGI. A Phosphothreonine modification is found at T1477. Phosphoserine is present on S1479. Residues 1497 to 1509 are compositionally biased toward low complexity; sequence SSGVTSGDSSDSA. Positions 1520–1529 are enriched in polar residues; it reads PITNGSTLSE. The span at 1535–1548 shows a compositional bias: low complexity; that stretch reads SLATSLSSSASSSS. Over residues 1549–1561 the composition is skewed to basic and acidic residues; that stretch reads EESKESSRARESS. S1605, S1607, S1678, S1683, and S1686 each carry phosphoserine. Disordered regions lie at residues 1670-1805, 1817-1839, and 1862-1899; these read ARKK…KYNT, KILS…KCHK, and DHGC…KISR. Positions 1676-1687 are enriched in basic and acidic residues; the sequence is HNSEDEQSLKSE. Residues 1701-1712 show a composition bias toward polar residues; it reads PVSSSHTAQSNV. Composition is skewed to basic and acidic residues over residues 1715–1728 and 1751–1769; these read SENR…DLRV and LKIE…DHAC. A phosphoserine mark is found at S1755, S1756, S1786, S1788, S1793, and S1820. Over residues 1821–1832 the composition is skewed to acidic residues; it reads DSEDSESEEQDR. Residue T1867 is modified to Phosphothreonine. 6 positions are modified to phosphoserine: S1871, S1904, S1905, S1907, S1910, and S1943. A Phosphothreonine modification is found at T1955. 2 disordered regions span residues 2014 to 2077 and 2112 to 2184; these read LNGD…TLAQ and TKVI…TKGK. 3 positions are modified to phosphoserine: S2018, S2020, and S2052. Basic and acidic residues-rich tracts occupy residues 2054 to 2069 and 2114 to 2139; these read EDSK…DRTF and VIHD…ENVK. The segment covering 2140–2165 has biased composition (polar residues); sequence ISETTGNSKFRPDTSSKSSDLGSVTE. T2164 carries the phosphothreonine modification. Phosphoserine occurs at positions 2166 and 2214.

As to quaternary structure, interacts with SMARCA4. Ubiquitously expressed. Expressed in respiratory epithelial cells and testis spermatozoa.

The protein resides in the cytoplasm. Its subcellular location is the nucleus. The protein localises to the cell projection. It is found in the cilium membrane. It localises to the cytoskeleton. The protein resides in the flagellum axoneme. Its function is as follows. May be a transcriptional activator. May be involved in chromatin remodeling. Plays a role in the regulation of cell morphology and cytoskeletal organization. Required in the control of cell shape. This chain is Bromodomain and WD repeat-containing protein 1 (BRWD1), found in Homo sapiens (Human).